An 801-amino-acid chain; its full sequence is Phosphatidylinositol 3-kinase pik3 (801 aa).

The C2 PI3K-type domain occupies 14 to 166 (VTARFLVKFC…RLDGLLLKLQ (153 aa)). One can recognise a PIK helical domain in the interval 257 to 439 (DKDLKPNSKI…SSVMFLFQKE (183 aa)). The 271-residue stretch at 515-785 (IPDACTVFKS…LINDSVSALF (271 aa)) folds into the PI3K/PI4K catalytic domain. Positions 521 to 527 (VFKSTMQ) are G-loop. Residues 654–662 (GVGDRHLDN) form a catalytic loop region. The tract at residues 673–694 (HADFGYILGRDPKLFSPAMKLS) is activation loop.

It belongs to the PI3/PI4-kinase family. In terms of assembly, component of the autophagy-specific vps34 PI3-kinase complex I composed of vps15, atg6, pik3/vps34, atg14 and atg38. Also a component of the VPS34 PI3-kinase complex II composed of atg6, pik3, vps15 and vps38.

It carries out the reaction a 1,2-diacyl-sn-glycero-3-phospho-(1D-myo-inositol) + ATP = a 1,2-diacyl-sn-glycero-3-phospho-(1D-myo-inositol-3-phosphate) + ADP + H(+). Its function is as follows. Phosphatidylinositol 3-kinase that functions as a part of the autophagy-specific VPS34 PI3-kinase complex I that plays a role in autophagosome assembly. This complex is essential to recruit the atg8-phosphatidylinositol conjugate and the atg12-atg5 conjugate to the pre-autophagosomal structure. Also functions as part of the VPS34 PI3-kinase complex II. In Schizosaccharomyces pombe (strain 972 / ATCC 24843) (Fission yeast), this protein is Phosphatidylinositol 3-kinase pik3 (pik3).